Reading from the N-terminus, the 280-residue chain is Phosphatidylserine decarboxylase proenzyme (280 aa).

Catalysis depends on charge relay system; for autoendoproteolytic cleavage activity residues aspartate 88, histidine 144, and serine 247. The active-site Schiff-base intermediate with substrate; via pyruvic acid; for decarboxylase activity is the serine 247. Serine 247 is subject to Pyruvic acid (Ser); by autocatalysis.

It belongs to the phosphatidylserine decarboxylase family. PSD-B subfamily. Prokaryotic type I sub-subfamily. In terms of assembly, heterodimer of a large membrane-associated beta subunit and a small pyruvoyl-containing alpha subunit. The cofactor is pyruvate. Is synthesized initially as an inactive proenzyme. Formation of the active enzyme involves a self-maturation process in which the active site pyruvoyl group is generated from an internal serine residue via an autocatalytic post-translational modification. Two non-identical subunits are generated from the proenzyme in this reaction, and the pyruvate is formed at the N-terminus of the alpha chain, which is derived from the carboxyl end of the proenzyme. The autoendoproteolytic cleavage occurs by a canonical serine protease mechanism, in which the side chain hydroxyl group of the serine supplies its oxygen atom to form the C-terminus of the beta chain, while the remainder of the serine residue undergoes an oxidative deamination to produce ammonia and the pyruvoyl prosthetic group on the alpha chain. During this reaction, the Ser that is part of the protease active site of the proenzyme becomes the pyruvoyl prosthetic group, which constitutes an essential element of the active site of the mature decarboxylase.

Its subcellular location is the cell membrane. It carries out the reaction a 1,2-diacyl-sn-glycero-3-phospho-L-serine + H(+) = a 1,2-diacyl-sn-glycero-3-phosphoethanolamine + CO2. The protein operates within phospholipid metabolism; phosphatidylethanolamine biosynthesis; phosphatidylethanolamine from CDP-diacylglycerol: step 2/2. In terms of biological role, catalyzes the formation of phosphatidylethanolamine (PtdEtn) from phosphatidylserine (PtdSer). This is Phosphatidylserine decarboxylase proenzyme from Xanthomonas axonopodis pv. citri (strain 306).